The chain runs to 465 residues: Probable dipeptidase A (465 aa).

Residue Cys-3 is part of the active site.

It belongs to the peptidase C69 family.

It catalyses the reaction an L-aminoacyl-L-amino acid + H2O = 2 an L-alpha-amino acid. The chain is Probable dipeptidase A (pepDA) from Streptococcus pyogenes serotype M3 (strain SSI-1).